The sequence spans 298 residues: Tyrosine recombinase XerC (298 aa).

Residues 1-84 form the Core-binding (CB) domain; sequence MNHIQEAFLN…TLRTFYEYWM (84 aa). One can recognise a Tyr recombinase domain in the interval 105–286; it reads YLPQFFYEEE…SNQQLRKVYL (182 aa). Active-site residues include R145, K169, H238, R241, and H264. Y273 acts as the O-(3'-phospho-DNA)-tyrosine intermediate in catalysis.

Belongs to the 'phage' integrase family. XerC subfamily. Forms a cyclic heterotetrameric complex composed of two molecules of XerC and two molecules of XerD.

Its subcellular location is the cytoplasm. Its function is as follows. Site-specific tyrosine recombinase, which acts by catalyzing the cutting and rejoining of the recombining DNA molecules. The XerC-XerD complex is essential to convert dimers of the bacterial chromosome into monomers to permit their segregation at cell division. It also contributes to the segregational stability of plasmids. The chain is Tyrosine recombinase XerC from Staphylococcus aureus (strain bovine RF122 / ET3-1).